Consider the following 367-residue polypeptide: GMP synthase [glutamine-hydrolyzing] subunit B (367 aa).

A GMPS ATP-PPase domain is found at 2-190; the sequence is FDPASFVKEI…LKLPKEISER (189 aa). 29–35 contacts ATP; that stretch reads SGGVDST.

In terms of assembly, heterodimer composed of a glutamine amidotransferase subunit (A) and a GMP-binding subunit (B).

It carries out the reaction XMP + L-glutamine + ATP + H2O = GMP + L-glutamate + AMP + diphosphate + 2 H(+). Its pathway is purine metabolism; GMP biosynthesis; GMP from XMP (L-Gln route): step 1/1. Catalyzes the synthesis of GMP from XMP. The protein is GMP synthase [glutamine-hydrolyzing] subunit B of Saccharolobus islandicus (strain M.16.27) (Sulfolobus islandicus).